Here is a 439-residue protein sequence, read N- to C-terminus: 26S proteasome regulatory subunit 6A (439 aa).

At Met1 the chain carries N-acetylmethionine. Residue Ser9 is modified to Phosphoserine. 227-234 (GPPGTGKT) contributes to the ATP binding site. At Ser376 the chain carries Phosphoserine.

It belongs to the AAA ATPase family. In terms of assembly, component of the 19S proteasome regulatory particle complex. The 26S proteasome consists of a 20S core particle (CP) and two 19S regulatory subunits (RP). The regulatory particle is made of a lid composed of 9 subunits, a base containing 6 ATPases including PSMC3 and few additional components. Interacts with PAAF1.

The protein localises to the cytoplasm. It localises to the nucleus. Component of the 26S proteasome, a multiprotein complex involved in the ATP-dependent degradation of ubiquitinated proteins. This complex plays a key role in the maintenance of protein homeostasis by removing misfolded or damaged proteins, which could impair cellular functions, and by removing proteins whose functions are no longer required. Therefore, the proteasome participates in numerous cellular processes, including cell cycle progression, apoptosis, or DNA damage repair. PSMC3 belongs to the heterohexameric ring of AAA (ATPases associated with diverse cellular activities) proteins that unfolds ubiquitinated target proteins that are concurrently translocated into a proteolytic chamber and degraded into peptides. The chain is 26S proteasome regulatory subunit 6A (Psmc3) from Rattus norvegicus (Rat).